Here is a 468-residue protein sequence, read N- to C-terminus: Cyclin-dependent kinase 14 (468 aa).

3 positions are modified to phosphoserine: S24, S77, and S94. The disordered stretch occupies residues 102–131 (FKSSSAGKESPKVRRHSSPSSPTSPKFGKA). S133 carries the phosphoserine modification. The 285-residue stretch at 134 to 418 (YEKLEKLGEG…AQAALSHEYF (285 aa)) folds into the Protein kinase domain. ATP contacts are provided by residues 140-148 (LGEGSYATV) and K163. Catalysis depends on D255, which acts as the Proton acceptor. The interval 448-468 (ESMRAFGKNSSYGKSLSNSKH) is disordered. Residues 455 to 468 (KNSSYGKSLSNSKH) are compositionally biased toward polar residues.

This sequence belongs to the protein kinase superfamily. CMGC Ser/Thr protein kinase family. CDC2/CDKX subfamily. Found in a complex with LRP6, CCNY and CAPRIN2 during G2/M stage; CAPRIN2 functions as a scaffold for the complex by binding to CCNY via its N terminus and to CDK14 via its C terminus. Interacts with CCNY; CCNY mediates its recruitment to the plasma membrane and promotes phosphorylation of LRP6. Interacts with CCDN3 and CDKN1A. Interacts with SEPT8. Interacts with 14-3-3 proteina YWHAB, YWHAE, YWHAH and YWHAQ.

It localises to the cell membrane. Its subcellular location is the cytoplasm. It is found in the nucleus. The enzyme catalyses L-seryl-[protein] + ATP = O-phospho-L-seryl-[protein] + ADP + H(+). It catalyses the reaction L-threonyl-[protein] + ATP = O-phospho-L-threonyl-[protein] + ADP + H(+). Its activity is regulated as follows. Serine/threonine-protein kinase activity is promoted by associated cyclins CCDN3 and CCNY and repressed by CDKN1A. Serine/threonine-protein kinase involved in the control of the eukaryotic cell cycle, whose activity is controlled by an associated cyclin. Acts as a cell-cycle regulator of Wnt signaling pathway during G2/M phase by mediating the phosphorylation of LRP6 at 'Ser-1490', leading to the activation of the Wnt signaling pathway. Acts as a regulator of cell cycle progression and cell proliferation via its interaction with CCDN3. Phosphorylates RB1 in vitro, however the relevance of such result remains to be confirmed in vivo. May also play a role in meiosis, neuron differentiation and may indirectly act as a negative regulator of insulin-responsive glucose transport. The protein is Cyclin-dependent kinase 14 (CDK14) of Oryctolagus cuniculus (Rabbit).